A 63-amino-acid chain; its full sequence is Cecropin-A2 (63 aa).

Residues 1 to 23 (MNFYNIFVFVALILAITIGQSEA) form the signal peptide. Arg62 carries the arginine amide modification.

The protein belongs to the cecropin family. In terms of tissue distribution, strongly expressed in larval, pupal and adult fat body and hemocytes after injection of bacteria. Maximal expression in the adult involves fat body cells of the head, thorax and abdomen.

It localises to the secreted. In terms of biological role, cecropins have lytic and antibacterial activity against several Gram-positive and Gram-negative bacteria. In Drosophila melanogaster (Fruit fly), this protein is Cecropin-A2.